The sequence spans 451 residues: Signal recognition particle 54 kDa protein (451 aa).

GTP-binding positions include 105 to 112, 187 to 191, and 247 to 250; these read GVQGTGKT, DTAGR, and TKMD.

It belongs to the GTP-binding SRP family. SRP54 subfamily. Part of the signal recognition particle protein translocation system, which is composed of SRP and FtsY. Archaeal SRP consists of a 7S RNA molecule of 300 nucleotides and two protein subunits: SRP54 and SRP19.

Its subcellular location is the cytoplasm. It carries out the reaction GTP + H2O = GDP + phosphate + H(+). Its function is as follows. Involved in targeting and insertion of nascent membrane proteins into the cytoplasmic membrane. Binds to the hydrophobic signal sequence of the ribosome-nascent chain (RNC) as it emerges from the ribosomes. The SRP-RNC complex is then targeted to the cytoplasmic membrane where it interacts with the SRP receptor FtsY. This is Signal recognition particle 54 kDa protein from Acidianus ambivalens (Desulfurolobus ambivalens).